Reading from the N-terminus, the 122-residue chain is Spermidine export protein MdtJ (122 aa).

The next 4 membrane-spanning stretches (helical) occupy residues 1–21, 31–51, 54–74, and 81–101; these read MIYW…TLSM, TGHI…SMAV, VALG…ITLF, and EPIS…IMLV.

This sequence belongs to the drug/metabolite transporter (DMT) superfamily. Small multidrug resistance (SMR) (TC 2.A.7.1) family. MdtJ subfamily. As to quaternary structure, forms a complex with MdtI.

The protein localises to the cell inner membrane. In terms of biological role, catalyzes the excretion of spermidine. This is Spermidine export protein MdtJ from Serratia proteamaculans (strain 568).